Here is a 376-residue protein sequence, read N- to C-terminus: Phytanoyl-CoA hydroxylase-interacting protein-like (376 aa).

2 positions are modified to phosphoserine: Ser-12 and Ser-15. An N-linked (GlcNAc...) asparagine glycan is attached at Asn-23. Phosphoserine is present on Ser-25. N-linked (GlcNAc...) asparagine glycosylation occurs at Asn-37. One can recognise a Fibronectin type-III domain in the interval 52–161 (VPHNIKISNI…EIIEFCTADY (110 aa)).

It belongs to the PHYHIP family.

In terms of biological role, may play a role in the development of the central system. This chain is Phytanoyl-CoA hydroxylase-interacting protein-like (PHYHIPL), found in Homo sapiens (Human).